A 1316-amino-acid chain; its full sequence is DNA-directed RNA polymerase subunit beta' (1316 aa).

Zn(2+) is bound by residues C60, C62, C75, and C78. Mg(2+) contacts are provided by D535, D537, and D539. Residues C891, C968, C975, and C978 each coordinate Zn(2+).

This sequence belongs to the RNA polymerase beta' chain family. The RNAP catalytic core consists of 2 alpha, 1 beta, 1 beta' and 1 omega subunit. When a sigma factor is associated with the core the holoenzyme is formed, which can initiate transcription. Requires Mg(2+) as cofactor. Zn(2+) serves as cofactor.

It catalyses the reaction RNA(n) + a ribonucleoside 5'-triphosphate = RNA(n+1) + diphosphate. Functionally, DNA-dependent RNA polymerase catalyzes the transcription of DNA into RNA using the four ribonucleoside triphosphates as substrates. In Mycobacterium marinum (strain ATCC BAA-535 / M), this protein is DNA-directed RNA polymerase subunit beta'.